A 972-amino-acid polypeptide reads, in one-letter code: UvrABC system protein A (972 aa).

ATP is bound at residue 32–39; the sequence is GLSGSGKS. A C4-type; atypical zinc finger spans residues 257-285; that stretch reads CPNGHALAVDDLEPRSFSFNSPYGACPEC. ABC transporter domains lie at 315 to 601 and 621 to 950; these read WSNG…KDSI and VDPR…KFLA. 654–661 contributes to the ATP binding site; that stretch reads GVSGSGKS. The C4-type zinc finger occupies 753–779; that stretch reads CEACTGDGTIKIEMNFLPDVYVPCEVC.

The protein belongs to the ABC transporter superfamily. UvrA family. In terms of assembly, forms a heterotetramer with UvrB during the search for lesions.

It is found in the cytoplasm. The UvrABC repair system catalyzes the recognition and processing of DNA lesions. UvrA is an ATPase and a DNA-binding protein. A damage recognition complex composed of 2 UvrA and 2 UvrB subunits scans DNA for abnormalities. When the presence of a lesion has been verified by UvrB, the UvrA molecules dissociate. This Mycobacterium bovis (strain ATCC BAA-935 / AF2122/97) protein is UvrABC system protein A.